We begin with the raw amino-acid sequence, 967 residues long: Phosphatidylserine decarboxylase proenzyme 3 (967 aa).

Residues 217-255 (FIAEPDSSIPPSESSVSISTDTGKETPPSKSKKSSNQPY) form a disordered region. Over residues 220-237 (EPDSSIPPSESSVSISTD) the composition is skewed to low complexity. Residues 250-373 (SSNQPYVSIG…SSAQVDPETG (124 aa)) form the C2 domain. Residues aspartate 343, serine 346, and aspartate 349 each contribute to the Ca(2+) site. Residues 532-544 (DQQATQTPQSPSS) are compositionally biased toward low complexity. Positions 532–566 (DQQATQTPQSPSSNEESGPGTPTQTSDQYEDSEDS) are disordered. The span at 545-558 (NEESGPGTPTQTSD) shows a compositional bias: polar residues. Residues aspartate 769, histidine 825, and serine 912 each act as charge relay system; for autoendoproteolytic cleavage activity in the active site. The active-site Schiff-base intermediate with substrate; via pyruvic acid; for decarboxylase activity is serine 912. The residue at position 912 (serine 912) is a Pyruvic acid (Ser); by autocatalysis. The segment at 947–967 (IGQKIDPNKPTDAEDHSKSDS) is disordered.

It belongs to the phosphatidylserine decarboxylase family. PSD-B subfamily. Eukaryotic type II sub-subfamily. In terms of assembly, heterodimer of a large membrane-associated beta subunit and a small pyruvoyl-containing alpha subunit. Pyruvate serves as cofactor. Requires Ca(2+) as cofactor. Is synthesized initially as an inactive proenzyme. Formation of the active enzyme involves a self-maturation process in which the active site pyruvoyl group is generated from an internal serine residue via an autocatalytic post-translational modification. Two non-identical subunits are generated from the proenzyme in this reaction, and the pyruvate is formed at the N-terminus of the alpha chain, which is derived from the carboxyl end of the proenzyme. The autoendoproteolytic cleavage occurs by a canonical serine protease mechanism, in which the side chain hydroxyl group of the serine supplies its oxygen atom to form the C-terminus of the beta chain, while the remainder of the serine residue undergoes an oxidative deamination to produce ammonia and the pyruvoyl prosthetic group on the alpha chain. During this reaction, the Ser that is part of the protease active site of the proenzyme becomes the pyruvoyl prosthetic group, which constitutes an essential element of the active site of the mature decarboxylase.

It localises to the golgi apparatus membrane. Its subcellular location is the endosome membrane. The protein localises to the cytoplasm. It carries out the reaction a 1,2-diacyl-sn-glycero-3-phospho-L-serine + H(+) = a 1,2-diacyl-sn-glycero-3-phosphoethanolamine + CO2. It participates in phospholipid metabolism; phosphatidylethanolamine biosynthesis; phosphatidylethanolamine from CDP-diacylglycerol: step 2/2. Its function is as follows. Catalyzes the formation of phosphatidylethanolamine (PtdEtn) from phosphatidylserine (PtdSer). Plays a central role in phospholipid metabolism and in the interorganelle trafficking of phosphatidylserine. Together with psd1 and psd2, responsible for the majority of phosphatidylethanolamine synthesis. This Schizosaccharomyces pombe (strain 972 / ATCC 24843) (Fission yeast) protein is Phosphatidylserine decarboxylase proenzyme 3.